Here is a 172-residue protein sequence, read N- to C-terminus: Ribosome maturation factor RimM (172 aa).

The PRC barrel domain occupies 95-168; the sequence is AEGEFYYHQI…RVDVEIMEGL (74 aa).

Belongs to the RimM family. In terms of assembly, binds ribosomal protein uS19.

The protein resides in the cytoplasm. Its function is as follows. An accessory protein needed during the final step in the assembly of 30S ribosomal subunit, possibly for assembly of the head region. Essential for efficient processing of 16S rRNA. May be needed both before and after RbfA during the maturation of 16S rRNA. It has affinity for free ribosomal 30S subunits but not for 70S ribosomes. This is Ribosome maturation factor RimM from Streptococcus equi subsp. zooepidemicus (strain MGCS10565).